Consider the following 260-residue polypeptide: Zinc import ATP-binding protein ZnuC (260 aa).

Positions 18–234 (IRLQEVAVTF…PEYQKLFGSH (217 aa)) constitute an ABC transporter domain. 50-57 (GNNGAGKT) contributes to the ATP binding site. Residues 241-260 (VFPHDHHDHSGPALAGGGRG) form a disordered region.

The protein belongs to the ABC transporter superfamily. Zinc importer (TC 3.A.1.15.5) family. As to quaternary structure, the complex is composed of two ATP-binding proteins (ZnuC), two transmembrane proteins (ZnuB) and a solute-binding protein (ZnuA).

It localises to the cell inner membrane. The enzyme catalyses Zn(2+)(out) + ATP(in) + H2O(in) = Zn(2+)(in) + ADP(in) + phosphate(in) + H(+)(in). In terms of biological role, part of the ABC transporter complex ZnuABC involved in zinc import. Responsible for energy coupling to the transport system. This Halorhodospira halophila (strain DSM 244 / SL1) (Ectothiorhodospira halophila (strain DSM 244 / SL1)) protein is Zinc import ATP-binding protein ZnuC.